A 594-amino-acid chain; its full sequence is Glomulin (594 aa).

The residue at position 2 (Ala2) is an N-acetylalanine. The segment at 2-553 (AVEELQSIIK…EEIPNMPPEM (552 aa)) is alpha-helical region with structural similarity to HEAT repeats. An important for interaction with RBX1 region spans residues 300 to 594 (IDQLPMVLSP…STSEENIGIK (295 aa)).

As to quaternary structure, interacts with FKBP4 and FKBP1A. Isoform 1: Interacts with RBX1 (via RING domain). Identified in complexes that contain RBX1 plus one of the cullins CUL1, CUL2, CUL3, and CUL4A. Identified in a SCF complex composed of CUL1, RBX1, SKP1, FBXW7 and GLMN. Component of a SCF-like complex consisting of CUL7, RBX1, SKP1, FBXW8 and GLMN. Interacts with unphosphorylated MET and is released upon MET phosphorylation. In terms of processing, phosphorylated on tyrosine residues. In terms of tissue distribution, ubiquitous.

Functionally, regulatory component of cullin-RING-based SCF (SKP1-Cullin-F-box protein) E3 ubiquitin-protein ligase complexes. Inhibits E3 ubiquitin ligase activity by binding to RBX1 (via RING domain) and inhibiting its interaction with the E2 ubiquitin-conjugating enzyme CDC34. Inhibits RBX1-mediated neddylation of CUL1. Required for normal stability and normal cellular levels of key components of SCF ubiquitin ligase complexes, including FBXW7, RBX1, CUL1, CUL2, CUL3, CUL4A, and thereby contributes to the regulation of CCNE1 and MYC levels. Essential for normal development of the vasculature. Contributes to the regulation of RPS6KB1 phosphorylation. The sequence is that of Glomulin (GLMN) from Homo sapiens (Human).